The primary structure comprises 459 residues: uncharacterized protein (459 aa).

Positions 7 to 65 constitute a TRAM domain; the sequence is PVNKNEIYTLTFEDLTHEGNGVAKIEGYPLFVPEVLPDEQAKVKVVKVNKNFGFGKLLE. Residues C78, C82, C85, and C164 each coordinate [4Fe-4S] cluster. The S-adenosyl-L-methionine site is built by Q288, Y317, E338, and D386. C413 serves as the catalytic Nucleophile.

The protein belongs to the class I-like SAM-binding methyltransferase superfamily. RNA M5U methyltransferase family.

This is an uncharacterized protein from Oceanobacillus iheyensis (strain DSM 14371 / CIP 107618 / JCM 11309 / KCTC 3954 / HTE831).